We begin with the raw amino-acid sequence, 524 residues long: Ribonuclease Y (524 aa).

A helical transmembrane segment spans residues 2 to 22; the sequence is GIVINLFLIIAASIVFFVVGF. The KH domain occupies 214–299; sequence ALSVVHIQSD…KAYQDAKKEI (86 aa). Residues 340-432 form the HD domain; the sequence is LLQHSREVAM…VDAANIVSLS (93 aa).

It belongs to the RNase Y family.

The protein localises to the cell membrane. In terms of biological role, endoribonuclease that initiates mRNA decay. The protein is Ribonuclease Y of Chlorobaculum tepidum (strain ATCC 49652 / DSM 12025 / NBRC 103806 / TLS) (Chlorobium tepidum).